Here is a 217-residue protein sequence, read N- to C-terminus: Pyrophosphatase PpaX (217 aa).

Aspartate 11 serves as the catalytic Nucleophile.

The protein belongs to the HAD-like hydrolase superfamily. PpaX family. Requires Mg(2+) as cofactor.

It carries out the reaction diphosphate + H2O = 2 phosphate + H(+). Hydrolyzes pyrophosphate formed during P-Ser-HPr dephosphorylation by HPrK/P. Might play a role in controlling the intracellular pyrophosphate pool. The sequence is that of Pyrophosphatase PpaX from Listeria monocytogenes serotype 4a (strain HCC23).